A 478-amino-acid chain; its full sequence is UDP-N-acetylmuramate--L-alanine ligase (478 aa).

112-118 is a binding site for ATP; the sequence is GTHGKTT.

It belongs to the MurCDEF family.

The protein resides in the cytoplasm. It carries out the reaction UDP-N-acetyl-alpha-D-muramate + L-alanine + ATP = UDP-N-acetyl-alpha-D-muramoyl-L-alanine + ADP + phosphate + H(+). It functions in the pathway cell wall biogenesis; peptidoglycan biosynthesis. In terms of biological role, cell wall formation. In Polaromonas naphthalenivorans (strain CJ2), this protein is UDP-N-acetylmuramate--L-alanine ligase.